Consider the following 57-residue polypeptide: COP9 signalosome complex subunit 9 (57 aa).

This sequence belongs to the CSN9 family. Component of the CSN complex, probably composed of cops1, cops2, cops3, cops4, cops5, cops6, cops7, cops8 and cops9.

It is found in the nucleus. The protein resides in the cytoplasm. The protein localises to the nucleoplasm. Its function is as follows. Component of the COP9 signalosome complex (CSN), a complex involved in various cellular and developmental processes. The CSN complex is an essential regulator of the ubiquitin (Ubl) conjugation pathway by mediating the deneddylation of the cullin subunits of SCF-type E3 ligase complexes, leading to decrease the Ubl ligase activity. May play a role in cell proliferation. In Xenopus tropicalis (Western clawed frog), this protein is COP9 signalosome complex subunit 9.